Here is a 134-residue protein sequence, read N- to C-terminus: Small ribosomal subunit protein uS9c (134 aa).

This sequence belongs to the universal ribosomal protein uS9 family.

It localises to the plastid. The protein resides in the chloroplast. This chain is Small ribosomal subunit protein uS9c (rps9), found in Thalassiosira pseudonana (Marine diatom).